The following is a 271-amino-acid chain: Short-chain type dehydrogenase/reductase (271 aa).

25–49 (IVTGASRGIGREIALNMAEKGAKVV) contributes to the NAD(+) binding site. A substrate-binding site is contributed by serine 166. Tyrosine 179 acts as the Proton acceptor in catalysis.

The protein belongs to the short-chain dehydrogenases/reductases (SDR) family.

This chain is Short-chain type dehydrogenase/reductase, found in Picea abies (Norway spruce).